The primary structure comprises 381 residues: Transaldolase 2 (381 aa).

Lys-141 acts as the Schiff-base intermediate with substrate in catalysis.

This sequence belongs to the transaldolase family. Type 2 subfamily.

Its subcellular location is the cytoplasm. It catalyses the reaction D-sedoheptulose 7-phosphate + D-glyceraldehyde 3-phosphate = D-erythrose 4-phosphate + beta-D-fructose 6-phosphate. It participates in carbohydrate degradation; pentose phosphate pathway; D-glyceraldehyde 3-phosphate and beta-D-fructose 6-phosphate from D-ribose 5-phosphate and D-xylulose 5-phosphate (non-oxidative stage): step 2/3. Transaldolase is important for the balance of metabolites in the pentose-phosphate pathway. The polypeptide is Transaldolase 2 (tal2) (Nostoc punctiforme (strain ATCC 29133 / PCC 73102)).